The sequence spans 94 residues: Alpha-conotoxin Cp20.3 (94 aa).

An N-terminal signal peptide occupies residues 1–24 (MPKLAVVLLVLLILPLSYFDAAGG). Residues 25–45 (QAVQGDRRGNGLARYLQRGDR) constitute a propeptide that is removed on maturation. At E46 the chain carries 4-carboxyglutamate; partial. E49 bears the 4-carboxyglutamate mark. P55 carries the post-translational modification 4-hydroxyproline. Intrachain disulfides connect C63–C72, C68–C80, C73–C90, and C78–C92.

The protein belongs to the conotoxin D superfamily. As to quaternary structure, hetero-, homo- or pseudo-homodimer (identical sequence, different post-translational modifications). As to expression, expressed by the venom duct.

Its subcellular location is the secreted. Alpha-D-conopeptides act on postsynaptic membranes, they bind to the nicotinic acetylcholine receptors (nAChR) and thus inhibit them. Through its two C-terminal domains, this homodimeric protein would bind to two nAChR allosteric sites, located outside the nAChR C-loop of the principal binding face and at the adjacent binding interface in a clockwise direction. This toxin specifically blocks mammalian neuronal nAChR of the alpha-7/CHRNA7 (IC(50)=0.25 nM), alpha-3-beta-2/CHRNA3-CHRNB2 (IC(50)=2.8 nM), and alpha-4-beta-2/CHRNA4-CHRNB2 (IC(50)=28.6 nM) subtypes. Has no effect on alpha-3-beta-4/CHRNA3-CHRNB4, alpha-4-beta-4/CHRNA4-CHRNB4 and alpha-1-beta-1-epsilon-delta/CHRNA1-CHRNB1-CHRNE-CHRND subtypes of nAChRs. The polypeptide is Alpha-conotoxin Cp20.3 (Conus capitaneus (Captain cone)).